The following is a 582-amino-acid chain: Threonine--tRNA ligase (582 aa).

Residues 185–478 (DHRKLGKELE…LTEQYGGAFP (294 aa)) form a catalytic region. Zn(2+) contacts are provided by Cys-278, His-329, and His-455.

It belongs to the class-II aminoacyl-tRNA synthetase family. In terms of assembly, homodimer. Zn(2+) serves as cofactor.

The protein localises to the cytoplasm. It carries out the reaction tRNA(Thr) + L-threonine + ATP = L-threonyl-tRNA(Thr) + AMP + diphosphate + H(+). Catalyzes the attachment of threonine to tRNA(Thr) in a two-step reaction: L-threonine is first activated by ATP to form Thr-AMP and then transferred to the acceptor end of tRNA(Thr). Also edits incorrectly charged L-seryl-tRNA(Thr). The protein is Threonine--tRNA ligase of Dehalococcoides mccartyi (strain CBDB1).